We begin with the raw amino-acid sequence, 95 residues long: Small ribosomal subunit protein bS18 (95 aa).

The protein belongs to the bacterial ribosomal protein bS18 family. As to quaternary structure, part of the 30S ribosomal subunit. Forms a tight heterodimer with protein bS6.

In terms of biological role, binds as a heterodimer with protein bS6 to the central domain of the 16S rRNA, where it helps stabilize the platform of the 30S subunit. This chain is Small ribosomal subunit protein bS18, found in Rickettsia akari (strain Hartford).